The following is a 504-amino-acid chain: DnaJ homolog subfamily C member 3 (504 aa).

The first 31 residues, 1 to 31 (MVAPGSVGSRLGAVFPFLLVLVDLQYEGAEC), serve as a signal peptide directing secretion. 9 TPR repeats span residues 37–70 (VEKHLELGKKLLAAGQLADALSQFHAAVDGDPDN), 72–104 (IAYYRRATVFLAMGKSKAALPDLTKVIALKMDF), 105–138 (TAARLQRGHLLLKQGKLDEAEDDFKKVLKSNPSE), 154–187 (MQRLRSQALDAFDGADYTAAITFLDKILEVCVWD), 188–221 (AELRELRAECFIKEGEPRKAISDLKAASKLKSDN), 222–255 (TEAFYKISTLYYQLGDHELSLSEVRECLKLDQDH), 268–301 (LNKLIESAEELIRDGRYTDATSKYESVMKTEPSV), 306–339 (VRSKERICHCFSKDEKPVEAIRICSEVLQMEPDN), and 340–373 (VNALKDRAEAYLIEEMYDEAIQDYEAAQEHNEND). The cysteines at positions 248 and 258 are disulfide-linked. Ser274 is modified (phosphoserine). Cysteines 313 and 329 form a disulfide. The flexible linker stretch occupies residues 375 to 393 (QIREGLEKAQRLLKQSQKR). The J domain maps to 394–462 (DYYKILGVKR…EMRKKFDDGE (69 aa)). Positions 451–481 (DPEMRKKFDDGEDPLDAESQQGGGGNPFHRS) are disordered.

Interacts with EIF2AK4/GCN2; this interaction occurs under endoplasmic reticulum (ER) stress, hypothermic and amino acid starving stress conditions and inhibits EIF2AK4/GCN2 kinase activity. Interacts with EIF2AK3. Interacts with EIF2AK2. Forms a trimeric complex with DNAJB1 and HSPA8. Interacts with THAP12. As to expression, widely expressed, with high level in the liver.

It localises to the endoplasmic reticulum. In terms of biological role, involved in the unfolded protein response (UPR) during endoplasmic reticulum (ER) stress. Acts as a negative regulator of the EIF2AK4/GCN2 kinase activity by preventing the phosphorylation of eIF-2-alpha at 'Ser-52' and hence attenuating general protein synthesis under ER stress, hypothermic and amino acid starving stress conditions. Co-chaperone of HSPA8/HSC70, it stimulates its ATPase activity. May inhibit both the autophosphorylation of EIF2AK2/PKR and the ability of EIF2AK2 to catalyze phosphorylation of the EIF2A. May inhibit EIF2AK3/PERK activity. This is DnaJ homolog subfamily C member 3 (Dnajc3) from Mus musculus (Mouse).